Consider the following 144-residue polypeptide: Putative pre-16S rRNA nuclease (144 aa).

Belongs to the YqgF nuclease family.

Its subcellular location is the cytoplasm. Could be a nuclease involved in processing of the 5'-end of pre-16S rRNA. This Blochmanniella pennsylvanica (strain BPEN) protein is Putative pre-16S rRNA nuclease.